The chain runs to 221 residues: 7-cyano-7-deazaguanine synthase (221 aa).

Residue 7-17 (LSGGMDSTTLL) coordinates ATP. Zn(2+) is bound by residues Cys-183, Cys-191, Cys-194, and Cys-197.

The protein belongs to the QueC family. Homodimer. Zn(2+) serves as cofactor.

It catalyses the reaction 7-carboxy-7-deazaguanine + NH4(+) + ATP = 7-cyano-7-deazaguanine + ADP + phosphate + H2O + H(+). The protein operates within purine metabolism; 7-cyano-7-deazaguanine biosynthesis. Catalyzes the ATP-dependent conversion of 7-carboxy-7-deazaguanine (CDG) to 7-cyano-7-deazaguanine (preQ(0)). The protein is 7-cyano-7-deazaguanine synthase of Caldicellulosiruptor bescii (strain ATCC BAA-1888 / DSM 6725 / KCTC 15123 / Z-1320) (Anaerocellum thermophilum).